A 247-amino-acid chain; its full sequence is Pyridoxine 5'-phosphate synthase (247 aa).

A 3-amino-2-oxopropyl phosphate-binding site is contributed by Asn12. Position 14–15 (Asp14–His15) interacts with 1-deoxy-D-xylulose 5-phosphate. Arg23 contributes to the 3-amino-2-oxopropyl phosphate binding site. His48 acts as the Proton acceptor in catalysis. Residues Arg50 and His55 each contribute to the 1-deoxy-D-xylulose 5-phosphate site. Glu75 acts as the Proton acceptor in catalysis. Thr105 provides a ligand contact to 1-deoxy-D-xylulose 5-phosphate. The Proton donor role is filled by His196. 3-amino-2-oxopropyl phosphate-binding positions include Gly197 and Gly218–His219.

It belongs to the PNP synthase family. In terms of assembly, homooctamer; tetramer of dimers.

It is found in the cytoplasm. It catalyses the reaction 3-amino-2-oxopropyl phosphate + 1-deoxy-D-xylulose 5-phosphate = pyridoxine 5'-phosphate + phosphate + 2 H2O + H(+). It functions in the pathway cofactor biosynthesis; pyridoxine 5'-phosphate biosynthesis; pyridoxine 5'-phosphate from D-erythrose 4-phosphate: step 5/5. Its function is as follows. Catalyzes the complicated ring closure reaction between the two acyclic compounds 1-deoxy-D-xylulose-5-phosphate (DXP) and 3-amino-2-oxopropyl phosphate (1-amino-acetone-3-phosphate or AAP) to form pyridoxine 5'-phosphate (PNP) and inorganic phosphate. This Pseudomonas fluorescens (strain Pf0-1) protein is Pyridoxine 5'-phosphate synthase.